The chain runs to 215 residues: Cytochrome b6 (215 aa).

Residues 32–52 (IFYCLGGITLTCFLVQVATGF) form a helical membrane-spanning segment. Cys-35 contacts heme c. Residues His-86 and His-100 each coordinate heme b. The next 3 helical transmembrane spans lie at 90–110 (ASMM…TGGF), 116–136 (LTWI…VTGY), and 186–206 (LHTF…FLMI). Positions 187 and 202 each coordinate heme b.

Belongs to the cytochrome b family. PetB subfamily. The 4 large subunits of the cytochrome b6-f complex are cytochrome b6, subunit IV (17 kDa polypeptide, PetD), cytochrome f and the Rieske protein, while the 4 small subunits are PetG, PetL, PetM and PetN. The complex functions as a dimer. The cofactor is heme b. Requires heme c as cofactor.

The protein localises to the plastid. The protein resides in the chloroplast thylakoid membrane. Functionally, component of the cytochrome b6-f complex, which mediates electron transfer between photosystem II (PSII) and photosystem I (PSI), cyclic electron flow around PSI, and state transitions. The polypeptide is Cytochrome b6 (Psilotum nudum (Whisk fern)).